We begin with the raw amino-acid sequence, 326 residues long: D-amino-acid oxidase (326 aa).

FAD contacts are provided by G14, V15, I16, D36, S44, A48, A49, I50, and V157. Residues Y219 and R274 each contribute to the D-proline site. Y219 and R274 together coordinate D-serine. 5 residues coordinate FAD: R274, G299, G300, G302, and T304. A D-proline-binding site is contributed by G300. A D-serine-binding site is contributed by G300.

This sequence belongs to the DAMOX/DASOX family. Homodimer. Requires FAD as cofactor.

Its subcellular location is the cytoplasm. It localises to the secreted. The protein resides in the cell wall. It catalyses the reaction a D-alpha-amino acid + O2 + H2O = a 2-oxocarboxylate + H2O2 + NH4(+). The enzyme catalyses D-phenylalanine + O2 + H2O = 3-phenylpyruvate + H2O2 + NH4(+). The catalysed reaction is D-lysine + O2 + H2O = 6-amino-2-oxohexanoate + H2O2 + NH4(+). It carries out the reaction D-methionine + O2 + H2O = 4-methylsulfanyl-2-oxobutanoate + H2O2 + NH4(+). It catalyses the reaction D-arginine + O2 + H2O = 5-guanidino-2-oxopentanoate + H2O2 + NH4(+). The enzyme catalyses D-ornithine + O2 + H2O = 5-amino-2-oxopentanoate + H2O2 + NH4(+). The catalysed reaction is D-leucine + O2 + H2O = 4-methyl-2-oxopentanoate + H2O2 + NH4(+). It carries out the reaction D-alanine + O2 + H2O = pyruvate + H2O2 + NH4(+). It catalyses the reaction D-valine + O2 + H2O = 3-methyl-2-oxobutanoate + H2O2 + NH4(+). The enzyme catalyses D-histidine + O2 + H2O = 3-(imidazol-5-yl)pyruvate + H2O2 + NH4(+). Its function is as follows. Catalyzes the oxidative deamination of D-amino acids with broad substrate specificity. The sequence is that of D-amino-acid oxidase from Glutamicibacter protophormiae (Brevibacterium protophormiae).